Reading from the N-terminus, the 430-residue chain is S-adenosylmethionine synthase (430 aa).

ATP is bound at residue His14. Residue Asp16 participates in Mg(2+) binding. Position 42 (Glu42) interacts with K(+). L-methionine contacts are provided by Glu55 and Gln98. The flexible loop stretch occupies residues 98-108 (QSADINRGVER). ATP is bound by residues 164–166 (DAK), 254–255 (KF), Asp263, 269–270 (RK), Ala286, and Lys290. L-methionine is bound at residue Asp263. Position 294 (Lys294) interacts with L-methionine.

Belongs to the AdoMet synthase family. In terms of assembly, homotetramer; dimer of dimers. Mg(2+) serves as cofactor. It depends on K(+) as a cofactor.

Its subcellular location is the cytoplasm. It carries out the reaction L-methionine + ATP + H2O = S-adenosyl-L-methionine + phosphate + diphosphate. The protein operates within amino-acid biosynthesis; S-adenosyl-L-methionine biosynthesis; S-adenosyl-L-methionine from L-methionine: step 1/1. Catalyzes the formation of S-adenosylmethionine (AdoMet) from methionine and ATP. The overall synthetic reaction is composed of two sequential steps, AdoMet formation and the subsequent tripolyphosphate hydrolysis which occurs prior to release of AdoMet from the enzyme. This Bacteroides fragilis (strain ATCC 25285 / DSM 2151 / CCUG 4856 / JCM 11019 / LMG 10263 / NCTC 9343 / Onslow / VPI 2553 / EN-2) protein is S-adenosylmethionine synthase.